A 310-amino-acid polypeptide reads, in one-letter code: Ribosomal RNA small subunit methyltransferase H (310 aa).

Residues 40–42, aspartate 59, phenylalanine 89, aspartate 104, and glutamine 111 each bind S-adenosyl-L-methionine; that span reads GGH.

This sequence belongs to the methyltransferase superfamily. RsmH family.

Its subcellular location is the cytoplasm. It catalyses the reaction cytidine(1402) in 16S rRNA + S-adenosyl-L-methionine = N(4)-methylcytidine(1402) in 16S rRNA + S-adenosyl-L-homocysteine + H(+). Functionally, specifically methylates the N4 position of cytidine in position 1402 (C1402) of 16S rRNA. In Amoebophilus asiaticus (strain 5a2), this protein is Ribosomal RNA small subunit methyltransferase H.